The primary structure comprises 300 residues: uncharacterized protein (300 aa).

The next 8 membrane-spanning stretches (helical) occupy residues Leu-13–Leu-35, Met-45–Ser-67, Trp-80–Leu-102, Gly-106–Leu-128, Ile-180–Leu-202, Tyr-217–Leu-236, Pro-243–Val-265, and Tyr-275–Leu-294.

This sequence belongs to the EamA transporter family.

The protein localises to the cell membrane. This is an uncharacterized protein from Haemophilus influenzae (strain ATCC 51907 / DSM 11121 / KW20 / Rd).